Reading from the N-terminus, the 769-residue chain is Integrin beta-8 (769 aa).

The first 42 residues, 1–42 (MCGSALAFFTAAFVCLQNDRRGPASFLWAAWVFSLVLGLGQG), serve as a signal peptide directing secretion. At 43–684 (EDNRCASSNA…ECFSSPSYLR (642 aa)) the chain is on the extracellular side. Residues 46–95 (RCASSNAASCARCLALGPECGWCVQEDFISGGSRSERCDIVSNLISKGCS) enclose the PSI domain. 25 cysteine pairs are disulfide-bonded: cysteine 47/cysteine 65, cysteine 55/cysteine 469, cysteine 58/cysteine 83, cysteine 68/cysteine 94, cysteine 211/cysteine 218, cysteine 266/cysteine 307, cysteine 407/cysteine 419, cysteine 439/cysteine 467, cysteine 471/cysteine 491, cysteine 471/cysteine 494, cysteine 481/cysteine 494, cysteine 499/cysteine 528, cysteine 511/cysteine 526, cysteine 520/cysteine 531, cysteine 533/cysteine 546, cysteine 553/cysteine 567, cysteine 561/cysteine 572, cysteine 574/cysteine 583, cysteine 585/cysteine 609, cysteine 593/cysteine 607, cysteine 601/cysteine 612, cysteine 614/cysteine 624, cysteine 627/cysteine 630, cysteine 634/cysteine 661, and cysteine 640/cysteine 657. The region spanning 146–384 (PVDLYYLVDV…NLVVEAYQKL (239 aa)) is the VWFA domain. Residues aspartate 154 and serine 156 each coordinate Mg(2+). Residue aspartate 193 participates in Ca(2+) binding. N-linked (GlcNAc...) asparagine glycosylation occurs at asparagine 233. Ca(2+) contacts are provided by asparagine 249, aspartate 251, proline 253, and glutamate 254. Position 254 (glutamate 254) interacts with Mg(2+). The N-linked (GlcNAc...) asparagine glycan is linked to asparagine 402. Asparagine 421, asparagine 431, asparagine 456, and asparagine 466 each carry an N-linked (GlcNAc...) asparagine glycan. I-EGF domains follow at residues 471–495 (CEDNRGPKGKCVDETFLDSKCFQCD), 499–547 (CHFD…KYCE), 548–584 (KDDFSCPYHHGNLCAGHGECEAGRCQCFSGWEGDRCQ), and 585–625 (CPSA…RFCE). Asparagine 648 carries an N-linked (GlcNAc...) asparagine glycan. A helical transmembrane segment spans residues 685–704 (IFFIIFIVTFLIGLLKVLII). At 705 to 769 (RQVILQWNSN…NAHETFRCNF (65 aa)) the chain is on the cytoplasmic side.

This sequence belongs to the integrin beta chain family. In terms of assembly, heterodimer of an alpha and a beta subunit. Beta-8 (ITGB8) associates with alpha-V (ITGAV) to form ITGAV:ITGB8. ITGAV:ITGB8 interacts with TGFB1. In terms of tissue distribution, placenta, kidney, brain, ovary, uterus and in several transformed cells. Transiently expressed in 293 human embryonic kidney cells.

It localises to the cell membrane. In terms of biological role, integrin alpha-V:beta-8 (ITGAV:ITGB8) is a receptor for fibronectin. It recognizes the sequence R-G-D in its ligands. Integrin alpha-V:beta-6 (ITGAV:ITGB6) mediates R-G-D-dependent release of transforming growth factor beta-1 (TGF-beta-1) from regulatory Latency-associated peptide (LAP), thereby playing a key role in TGF-beta-1 activation on the surface of activated regulatory T-cells (Tregs). Required during vasculogenesis. This is Integrin beta-8 from Homo sapiens (Human).